The sequence spans 156 residues: Ribonuclease H (156 aa).

The region spanning 3-144 is the RNase H type-1 domain; it reads ELKQIRIYTD…CDTLAREAAE (142 aa). Positions 12, 50, 72, and 136 each coordinate Mg(2+).

The protein belongs to the RNase H family. As to quaternary structure, monomer. Requires Mg(2+) as cofactor.

Its subcellular location is the cytoplasm. It catalyses the reaction Endonucleolytic cleavage to 5'-phosphomonoester.. In terms of biological role, endonuclease that specifically degrades the RNA of RNA-DNA hybrids. In Shewanella amazonensis (strain ATCC BAA-1098 / SB2B), this protein is Ribonuclease H.